We begin with the raw amino-acid sequence, 324 residues long: Type II restriction enzyme AplI (324 aa).

The protein belongs to the BsuBI/PstI type II restriction endonuclease family. The cofactor is Mg(2+).

It catalyses the reaction Endonucleolytic cleavage of DNA to give specific double-stranded fragments with terminal 5'-phosphates.. Activated by K(+) and Na(+) ions, whereas NH(4)(+) ions appear to inhibit endonuclease activity. Functionally, a P subtype restriction enzyme that recognizes the double-stranded sequence 5'-CTGCAG-3' and cleaves after A-5. The chain is Type II restriction enzyme AplI (aplIR) from Arthrospira platensis (strain NIES-39 / UTEX 3086 / IAM M-135) (Spirulina platensis).